The following is a 33-amino-acid chain: Pardaxin P-4 (33 aa).

Belongs to the pardaxin family. Monomer. In aqueous solution exists as a tetramer.

It localises to the secreted. Its subcellular location is the target cell membrane. In terms of biological role, exhibits unusual shark repellent and surfactant properties. Forms voltage-dependent, ion-permeable channels in membranes. At high concentration causes cell membrane lysis. In Pardachirus marmoratus (Finless sole), this protein is Pardaxin P-4.